Here is a 346-residue protein sequence, read N- to C-terminus: Hexosaminidase D (346 aa).

E141 (proton donor) is an active-site residue.

This sequence belongs to the glycosyl hydrolase 20 family. Homodimer; disulfide-linked.

Its subcellular location is the cytoplasm. The protein resides in the nucleus. The protein localises to the extracellular vesicle. It carries out the reaction Hydrolysis of terminal non-reducing N-acetyl-D-hexosamine residues in N-acetyl-beta-D-hexosaminides.. Inhibited by O-(2-acetamido-2-deoxy-D-glucopyranosylidene)amino N-phenylcarbamate (PUGNAc). Inhibited by galacto-NAG-thiazoline. Functionally, has hexosaminidase activity. Responsible for the cleavage of the monosaccharides N-acetylglucosamine (GlcNAc) and N-acetylgalactosamine (GalNAc) from cellular substrates. Has a preference for galactosaminide over glucosaminide substrates. The sequence is that of Hexosaminidase D from Bos taurus (Bovine).